A 426-amino-acid chain; its full sequence is Histidine--tRNA ligase 1 (426 aa).

The protein belongs to the class-II aminoacyl-tRNA synthetase family. In terms of assembly, homodimer.

The protein localises to the cytoplasm. It carries out the reaction tRNA(His) + L-histidine + ATP = L-histidyl-tRNA(His) + AMP + diphosphate + H(+). The protein is Histidine--tRNA ligase 1 of Shouchella clausii (strain KSM-K16) (Alkalihalobacillus clausii).